The primary structure comprises 200 residues: ATP-dependent Clp protease proteolytic subunit 1 (200 aa).

The active-site Nucleophile is the Ser-102. The active site involves His-127.

This sequence belongs to the peptidase S14 family. In terms of assembly, fourteen ClpP subunits assemble into 2 heptameric rings which stack back to back to give a disk-like structure with a central cavity, resembling the structure of eukaryotic proteasomes.

Its subcellular location is the cytoplasm. The catalysed reaction is Hydrolysis of proteins to small peptides in the presence of ATP and magnesium. alpha-casein is the usual test substrate. In the absence of ATP, only oligopeptides shorter than five residues are hydrolyzed (such as succinyl-Leu-Tyr-|-NHMec, and Leu-Tyr-Leu-|-Tyr-Trp, in which cleavage of the -Tyr-|-Leu- and -Tyr-|-Trp bonds also occurs).. Its function is as follows. Cleaves peptides in various proteins in a process that requires ATP hydrolysis. Has a chymotrypsin-like activity. Plays a major role in the degradation of misfolded proteins. This Bradyrhizobium diazoefficiens (strain JCM 10833 / BCRC 13528 / IAM 13628 / NBRC 14792 / USDA 110) protein is ATP-dependent Clp protease proteolytic subunit 1.